Reading from the N-terminus, the 388-residue chain is Acyl-CoA dehydrogenase fadE12 (388 aa).

Belongs to the acyl-CoA dehydrogenase family. FAD serves as cofactor.

It catalyses the reaction a 2,3-saturated acyl-CoA + A = a 2,3-dehydroacyl-CoA + AH2. The polypeptide is Acyl-CoA dehydrogenase fadE12 (fadE12) (Mycobacterium bovis (strain ATCC BAA-935 / AF2122/97)).